The sequence spans 133 residues: MANHDPISDMLTRIRNASEKRHETTKIPASRMTRSIAKVLQQEGFISEISEQGEGVRTELVLSLKYSGKHRLPTIRSMQRVSKPGLRIYKNTRGLPKVLGGLGVAIISTSKGVMSDRDARREGVGGEVLCYVY.

Belongs to the universal ribosomal protein uS8 family. In terms of assembly, part of the 30S ribosomal subunit. Contacts proteins S5 and S12.

Functionally, one of the primary rRNA binding proteins, it binds directly to 16S rRNA central domain where it helps coordinate assembly of the platform of the 30S subunit. The chain is Small ribosomal subunit protein uS8 from Parasynechococcus marenigrum (strain WH8102).